Consider the following 333-residue polypeptide: Tetraacyldisaccharide 4'-kinase (333 aa).

55–62 (SVGGNGKT) lines the ATP pocket.

The protein belongs to the LpxK family.

It carries out the reaction a lipid A disaccharide + ATP = a lipid IVA + ADP + H(+). It functions in the pathway glycolipid biosynthesis; lipid IV(A) biosynthesis; lipid IV(A) from (3R)-3-hydroxytetradecanoyl-[acyl-carrier-protein] and UDP-N-acetyl-alpha-D-glucosamine: step 6/6. Functionally, transfers the gamma-phosphate of ATP to the 4'-position of a tetraacyldisaccharide 1-phosphate intermediate (termed DS-1-P) to form tetraacyldisaccharide 1,4'-bis-phosphate (lipid IVA). The chain is Tetraacyldisaccharide 4'-kinase from Aeromonas hydrophila subsp. hydrophila (strain ATCC 7966 / DSM 30187 / BCRC 13018 / CCUG 14551 / JCM 1027 / KCTC 2358 / NCIMB 9240 / NCTC 8049).